A 444-amino-acid polypeptide reads, in one-letter code: UDP-N-acetylglucosamine 1-carboxyvinyltransferase (444 aa).

22-23 is a phosphoenolpyruvate binding site; that stretch reads KN. Arginine 94 contacts UDP-N-acetyl-alpha-D-glucosamine. Aspartate 119 (proton donor) is an active-site residue. Aspartate 309 and valine 331 together coordinate UDP-N-acetyl-alpha-D-glucosamine.

It belongs to the EPSP synthase family. MurA subfamily.

The protein localises to the cytoplasm. The enzyme catalyses phosphoenolpyruvate + UDP-N-acetyl-alpha-D-glucosamine = UDP-N-acetyl-3-O-(1-carboxyvinyl)-alpha-D-glucosamine + phosphate. It functions in the pathway cell wall biogenesis; peptidoglycan biosynthesis. In terms of biological role, cell wall formation. Adds enolpyruvyl to UDP-N-acetylglucosamine. This Chlamydia trachomatis serovar D (strain ATCC VR-885 / DSM 19411 / UW-3/Cx) protein is UDP-N-acetylglucosamine 1-carboxyvinyltransferase.